The following is a 543-amino-acid chain: Cytochrome P450 monooxygenase sphH (543 aa).

Helical transmembrane passes span 1 to 21 (MGPIHNYFGVVCLGIAASVYF) and 32 to 52 (IATFAVLLTGIAISKLLYQLF). Cysteine 487 is a binding site for heme.

Belongs to the cytochrome P450 family. It depends on heme as a cofactor.

The protein resides in the membrane. The enzyme catalyses presphingofungin + 2 reduced [NADPH--hemoprotein reductase] + O2 = sphingofungin B1 + 2 oxidized [NADPH--hemoprotein reductase] + H2O + 2 H(+). Its pathway is secondary metabolite biosynthesis. Cytochrome P450 monooxygenase; part of the gene cluster that mediates the biosynthesis of sphingofungins, bioactive molecules acting as sphingolipid inhibitors via inhibiting serine palmitoyl transferase (SPT). Within the pathway, sphH catalyzes the conversion of presphingofungin into sphingofungin B1 via hydroxylagtion at position C-14. Sphingofungin biosynthesis starts with the PKS sphB that produces an C18 polyketide precursor 3-hydroxyoctadeca-4,10-dienoyl-ACP containing one delta-6 desaturation and one delta-12 desaturation. The aminoacyl transferase sphA uses the sphB product to produce 3-keto-presphingofungin by adding an aminomalonate molecule. SphF then reduces the C-3 ketone of 3-keto-presphingofungin which leads to presphingofungin. The cytochrome P450 monooxygenase sphH converts presphingofungin into sphingofungin B1 which is further converted to sphingofungin B by the dioxygenase sphC. SphC is also able to convert presphingofungin into sphingofungin B2. The acetyltransferase sphE acetylates sphingofungin B to produce sphingofungin C, but can also convert sphingofungin B1 into sphingofungin C1 and sphingofungin B2 into sphingofungin C2. Finally, sphingofungin C can be spontaneously converted into sphingofungin D. The chain is Cytochrome P450 monooxygenase sphH from Aspergillus fumigatus (strain CBS 144.89 / FGSC A1163 / CEA10) (Neosartorya fumigata).